Consider the following 1102-residue polypeptide: Coiled-coil domain-containing protein AGAP005037 (1102 aa).

Basic and acidic residues predominate over residues Met1–Ser11. 2 disordered regions span residues Met1–Gly69 and His295–Tyr318. Low complexity predominate over residues Ser12–Thr21. The span at Ile50–Arg65 shows a compositional bias: basic and acidic residues. The stretch at His405–Asn430 forms a coiled coil. 2 disordered regions span residues Arg450 to His475 and Asp489 to Met539. Coiled coils occupy residues Glu554 to Leu579 and Asp614 to Asn654. Disordered regions lie at residues Leu745–Arg774, Thr832–Asn958, and Leu1031–Pro1087. Residues Thr832–Val849 show a composition bias toward polar residues. Pro residues predominate over residues Pro867–Pro881. A compositionally biased stretch (low complexity) spans Thr904–Val918. Positions Asp936–Asn958 are enriched in polar residues.

The chain is Coiled-coil domain-containing protein AGAP005037 from Anopheles gambiae (African malaria mosquito).